Reading from the N-terminus, the 74-residue chain is Serine rich endogenous peptide 16 (74 aa).

The N-terminal stretch at 1-31 (MATKISHLVSLLLSLLLLLLFISSQVGFTEA) is a signal peptide. Positions 29 to 74 (TEAKRDERKKMSSPPIPSPLIPSPPIPPPPPRFYVPPSKSRRGKGP) are disordered. A compositionally biased stretch (pro residues) spans 42 to 62 (PPIPSPLIPSPPIPPPPPRFY). An SCOOP motif motif is present at residues 60–74 (RFYVPPSKSRRGKGP). A SxS motif essential for MIK2 binding motif is present at residues 66-68 (SKS).

This sequence belongs to the serine rich endogenous peptide (SCOOP) phytocytokine family. Interacts with MIK2 (via extracellular leucine-rich repeat domain); this interaction triggers the formation of complex between MIK2 and the BAK1/SERK3 and SERK4 coreceptors, and subsequent BAK1 activation by phosphorylation.

Its subcellular location is the cell membrane. The protein localises to the secreted. It localises to the extracellular space. It is found in the apoplast. Functionally, brassicaceae-specific phytocytokine (plant endogenous peptide released into the apoplast) perceived by MIK2 in a BAK1/SERK3 and SERK4 coreceptors-dependent manner, that modulates various physiological and antimicrobial processes including growth prevention and reactive oxygen species (ROS) response regulation. The sequence is that of Serine rich endogenous peptide 16 from Arabidopsis thaliana (Mouse-ear cress).